The sequence spans 306 residues: Palmitoyl-protein thioesterase ABHD10, mitochondrial (306 aa).

The N-terminal 52 residues, 1-52 (MAGVGLAAVPAWVPCRRWGLAAVTFGFHHGLSTLLARKTERAPQWLRACRHK), are a transit peptide targeting the mitochondrion. Positions 78–177 (IIFIPGYISN…KVVALVGVAT (100 aa)) constitute an AB hydrolase-1 domain. Active-site charge relay system residues include S152, D249, and H279.

This sequence belongs to the AB hydrolase superfamily.

It localises to the mitochondrion. The enzyme catalyses S-hexadecanoyl-L-cysteinyl-[protein] + H2O = L-cysteinyl-[protein] + hexadecanoate + H(+). The catalysed reaction is mycophenolic acid O-acyl-beta-D-glucuronide + H2O = mycophenolate + D-glucuronate + H(+). Inhibited by palmostatin-B. In terms of biological role, acts as an acyl-protein thioesterase that hydrolyzes fatty acids from acylated residues in proteins. Regulates the mitochondrial S-depalmitoylation of the nucleophilic active site residue of peroxiredoxin-5/PRDX5, a key antioxidant protein, therefore modulating mitochondrial antioxidant ability. Also catalyzes the deglucuronidation of mycophenolic acid acyl-glucuronide, an active metabolite of the immunosuppressant drug mycophenolate. The sequence is that of Palmitoyl-protein thioesterase ABHD10, mitochondrial (ABHD10) from Bos taurus (Bovine).